A 352-amino-acid polypeptide reads, in one-letter code: Probable RNA methyltransferase CV_2253 (352 aa).

Glu-91 functions as the Proton acceptor in the catalytic mechanism. A Radical SAM core domain is found at Leu-94 to Asp-320. A disulfide bridge connects residues Cys-101 and Cys-325. Cys-108, Cys-112, and Cys-115 together coordinate [4Fe-4S] cluster. S-adenosyl-L-methionine is bound by residues Gly-153 to Glu-154, Ser-183, Ser-206 to His-208, and Asn-282. The active-site S-methylcysteine intermediate is Cys-325.

It belongs to the radical SAM superfamily. RlmN family. [4Fe-4S] cluster serves as cofactor.

It is found in the cytoplasm. This chain is Probable RNA methyltransferase CV_2253, found in Chromobacterium violaceum (strain ATCC 12472 / DSM 30191 / JCM 1249 / CCUG 213 / NBRC 12614 / NCIMB 9131 / NCTC 9757 / MK).